A 165-amino-acid polypeptide reads, in one-letter code: Large ribosomal subunit protein uL10 (165 aa).

The protein belongs to the universal ribosomal protein uL10 family. Part of the ribosomal stalk of the 50S ribosomal subunit. The N-terminus interacts with L11 and the large rRNA to form the base of the stalk. The C-terminus forms an elongated spine to which L12 dimers bind in a sequential fashion forming a multimeric L10(L12)X complex.

Forms part of the ribosomal stalk, playing a central role in the interaction of the ribosome with GTP-bound translation factors. The sequence is that of Large ribosomal subunit protein uL10 from Mycoplasma mycoides subsp. mycoides SC (strain CCUG 32753 / NCTC 10114 / PG1).